The primary structure comprises 1260 residues: Neural cell adhesion molecule L1 (1260 aa).

A signal peptide spans 1–19 (MVVMLRYVWPLLLCSPCLL). Over 20 to 1123 (IQIPDEYKGH…VSTTGSFASE (1104 aa)) the chain is Extracellular. Ig-like C2-type domains lie at 35–130 (PVIT…IQLV), 138–225 (PKET…EPID), 239–327 (PRLL…YYVT), 332–419 (PYWL…AYIY), 424–506 (PARI…NNVT), and 517–600 (TQIT…DEVE). 2 disulfide bridges follow: cysteine 57/cysteine 113 and cysteine 157/cysteine 208. Residues asparagine 100, asparagine 202, asparagine 246, and asparagine 293 are each glycosylated (N-linked (GlcNAc...) asparagine). 2 cysteine pairs are disulfide-bonded: cysteine 263–cysteine 311 and cysteine 353–cysteine 403. Residues asparagine 432, asparagine 478, asparagine 489, and asparagine 504 are each glycosylated (N-linked (GlcNAc...) asparagine). A disulfide bridge links cysteine 447 with cysteine 496. Cysteines 538 and 590 form a disulfide. Short sequence motifs (cell attachment site) lie at residues 553–555 (RGD) and 562–564 (RGD). N-linked (GlcNAc...) asparagine glycosylation is found at asparagine 587 and asparagine 670. Fibronectin type-III domains follow at residues 613–711 (PVPH…TPEA), 716–809 (NPVD…SGED), 811–916 (PQVS…PEGV), 919–1015 (HPEA…MALF), and 1014–1112 (LFGK…TGPV). The interval 697–724 (GEPSPVSESVVTPEAAPEKNPVDVRGEG) is disordered. Over residues 712–724 (APEKNPVDVRGEG) the composition is skewed to basic and acidic residues. 11 N-linked (GlcNAc...) asparagine glycosylation sites follow: asparagine 725, asparagine 776, asparagine 824, asparagine 848, asparagine 875, asparagine 968, asparagine 978, asparagine 1022, asparagine 1030, asparagine 1073, and asparagine 1107. A helical membrane pass occupies residues 1124–1146 (GWFIAFVSAIILLLLILLILCFI). The Cytoplasmic segment spans residues 1147–1260 (KRSKGGKYSV…SPINPAVALE (114 aa)). A phosphoserine mark is found at serine 1166, serine 1181, serine 1184, serine 1197, serine 1246, serine 1247, and serine 1251. 2 disordered regions span residues 1183 to 1210 (ESDN…SDDS) and 1229 to 1260 (IGQY…VALE). A compositionally biased stretch (polar residues) spans 1244–1253 (NDSSGATSPI).

This sequence belongs to the immunoglobulin superfamily. L1/neurofascin/NgCAM family. In terms of assembly, interacts with SHTN1; the interaction occurs in axonal growth cones. Interacts with isoform 2 of BSG. As to expression, expressed in the brain, including in the molecular layer of the cerebellar cortex, the fiber-rich layers of the hippocampus (alveus, and strata lacunosum moleculare, radiatum, and oriens), the nerve fiber layer and the inner and outer plexiform layers of the retina, and in the molecular layer of the olfactory bulb (at protein level).

It localises to the cell membrane. The protein resides in the cell projection. It is found in the growth cone. In terms of biological role, neural cell adhesion molecule involved in the dynamics of cell adhesion and in the generation of transmembrane signals at tyrosine kinase receptors. During brain development, critical in multiple processes, including neuronal migration, axonal growth and fasciculation, and synaptogenesis. In the mature brain, plays a role in the dynamics of neuronal structure and function, including synaptic plasticity. In Mus musculus (Mouse), this protein is Neural cell adhesion molecule L1 (L1cam).